The primary structure comprises 253 residues: Triosephosphate isomerase (253 aa).

Position 12–14 (Asn-12–Lys-14) interacts with substrate. His-100 functions as the Electrophile in the catalytic mechanism. Residue Glu-170 is the Proton acceptor of the active site. Substrate contacts are provided by residues Gly-176, Ser-215, and Gly-236–Gly-237.

It belongs to the triosephosphate isomerase family. As to quaternary structure, homodimer.

The protein localises to the cytoplasm. The catalysed reaction is D-glyceraldehyde 3-phosphate = dihydroxyacetone phosphate. The protein operates within carbohydrate biosynthesis; gluconeogenesis. Its pathway is carbohydrate degradation; glycolysis; D-glyceraldehyde 3-phosphate from glycerone phosphate: step 1/1. Its function is as follows. Involved in the gluconeogenesis. Catalyzes stereospecifically the conversion of dihydroxyacetone phosphate (DHAP) to D-glyceraldehyde-3-phosphate (G3P). This chain is Triosephosphate isomerase, found in Rhodopseudomonas palustris (strain BisA53).